A 95-amino-acid chain; its full sequence is MLLYLNSTLCSIISIMYKITNVSFVEYYSNNVSKDVIYSYLMNSTCSNKGTIKLNLESGKRLKQEGPYILPPIRWLDSFEKNAEFTILCEVDDIK.

Its function is as follows. The presence of the two linear plasmids, termed pGKL1 and pGKL2, in strains of Kluyveromyces lactis confers the killer phenotype to the host cell, by promoting the secretion of a toxin able to inhibit the growth of sensitive strains. This is an uncharacterized protein from Kluyveromyces lactis (strain ATCC 8585 / CBS 2359 / DSM 70799 / NBRC 1267 / NRRL Y-1140 / WM37) (Yeast).